A 117-amino-acid polypeptide reads, in one-letter code: Ribosome-binding factor A (117 aa).

It belongs to the RbfA family. Monomer. Binds 30S ribosomal subunits, but not 50S ribosomal subunits or 70S ribosomes.

The protein localises to the cytoplasm. Its function is as follows. One of several proteins that assist in the late maturation steps of the functional core of the 30S ribosomal subunit. Associates with free 30S ribosomal subunits (but not with 30S subunits that are part of 70S ribosomes or polysomes). Required for efficient processing of 16S rRNA. May interact with the 5'-terminal helix region of 16S rRNA. The chain is Ribosome-binding factor A from Nitrosomonas eutropha (strain DSM 101675 / C91 / Nm57).